The primary structure comprises 337 residues: Beta-glucosidase-like protein NCA3, mitochondrial (337 aa).

Residues 57–67 (ESAATTTTLSS) are compositionally biased toward low complexity. The segment at 57-84 (ESAATTTTLSSSEKDTSEQKRDGGFQDG) is disordered. Residues 68-80 (SEKDTSEQKRDGG) show a composition bias toward basic and acidic residues.

Belongs to the SUN family.

The protein localises to the mitochondrion. In terms of biological role, involved in the mitochondrial expression of subunits 6 and 8 of the F0-F1 ATP synthase. This Saccharomyces cerevisiae (strain ATCC 204508 / S288c) (Baker's yeast) protein is Beta-glucosidase-like protein NCA3, mitochondrial (NCA3).